We begin with the raw amino-acid sequence, 183 residues long: Beta-defensin 129 (183 aa).

The signal sequence occupies residues 1–19 (MKLLFPIFASLMLQYQVNT). 3 cysteine pairs are disulfide-bonded: C27–C53, C34–C48, and C38–C54. Positions 141–183 (TATSTKSNTKESRDSATASPPPAPPPPNILPTPSLELEEAEEQ) are disordered. Pro residues predominate over residues 159-170 (SPPPAPPPPNIL).

The protein belongs to the beta-defensin family.

It is found in the secreted. Its function is as follows. Has antibacterial activity. The polypeptide is Beta-defensin 129 (DEFB129) (Pan troglodytes (Chimpanzee)).